The primary structure comprises 107 residues: Urease subunit beta (107 aa).

It belongs to the urease beta subunit family. As to quaternary structure, heterotrimer of UreA (gamma), UreB (beta) and UreC (alpha) subunits. Three heterotrimers associate to form the active enzyme.

Its subcellular location is the cytoplasm. The catalysed reaction is urea + 2 H2O + H(+) = hydrogencarbonate + 2 NH4(+). The protein operates within nitrogen metabolism; urea degradation; CO(2) and NH(3) from urea (urease route): step 1/1. The polypeptide is Urease subunit beta (Janthinobacterium sp. (strain Marseille) (Minibacterium massiliensis)).